The chain runs to 483 residues: Cobyric acid synthase (483 aa).

A GATase cobBQ-type domain is found at 244-430 (WLRVIAPVLP…LHGLFDHAEA (187 aa)). Catalysis depends on Cys-325, which acts as the Nucleophile. His-422 is a catalytic residue.

Belongs to the CobB/CobQ family. CobQ subfamily.

It functions in the pathway cofactor biosynthesis; adenosylcobalamin biosynthesis. Functionally, catalyzes amidations at positions B, D, E, and G on adenosylcobyrinic A,C-diamide. NH(2) groups are provided by glutamine, and one molecule of ATP is hydrogenolyzed for each amidation. The chain is Cobyric acid synthase from Methylobacillus flagellatus (strain ATCC 51484 / DSM 6875 / VKM B-1610 / KT).